The sequence spans 201 residues: Small ribosomal subunit protein uS4c (201 aa).

Positions Gly20–Tyr44 are disordered. An S4 RNA-binding domain is found at Met89 to Ile150.

The protein belongs to the universal ribosomal protein uS4 family. In terms of assembly, part of the 30S ribosomal subunit. Contacts protein S5. The interaction surface between S4 and S5 is involved in control of translational fidelity.

It localises to the plastid. It is found in the chloroplast. In terms of biological role, one of the primary rRNA binding proteins, it binds directly to 16S rRNA where it nucleates assembly of the body of the 30S subunit. Functionally, with S5 and S12 plays an important role in translational accuracy. The chain is Small ribosomal subunit protein uS4c (rps4) from Nicotiana tomentosiformis (Tobacco).